Reading from the N-terminus, the 145-residue chain is Small ribosomal subunit protein eS12A (145 aa).

This sequence belongs to the eukaryotic ribosomal protein eS12 family. As to quaternary structure, component of the small ribosomal subunit (SSU). Mature yeast ribosomes consist of a small (40S) and a large (60S) subunit. The 40S small subunit contains 1 molecule of ribosomal RNA (18S rRNA) and at least 33 different proteins. The large 60S subunit contains 3 rRNA molecules (25S, 5.8S and 5S rRNA) and at least 46 different proteins.

The protein resides in the cytoplasm. Functionally, component of the ribosome, a large ribonucleoprotein complex responsible for the synthesis of proteins in the cell. The small ribosomal subunit (SSU) binds messenger RNAs (mRNAs) and translates the encoded message by selecting cognate aminoacyl-transfer RNA (tRNA) molecules. The large subunit (LSU) contains the ribosomal catalytic site termed the peptidyl transferase center (PTC), which catalyzes the formation of peptide bonds, thereby polymerizing the amino acids delivered by tRNAs into a polypeptide chain. The nascent polypeptides leave the ribosome through a tunnel in the LSU and interact with protein factors that function in enzymatic processing, targeting, and the membrane insertion of nascent chains at the exit of the ribosomal tunnel. The polypeptide is Small ribosomal subunit protein eS12A (rps1201) (Schizosaccharomyces pombe (strain 972 / ATCC 24843) (Fission yeast)).